The chain runs to 336 residues: Glyceraldehyde-3-phosphate dehydrogenase (336 aa).

NAD(+)-binding positions include 12–13 (RI), aspartate 35, arginine 79, and serine 121. Residues 152–154 (SCT) and threonine 183 each bind D-glyceraldehyde 3-phosphate. Cysteine 153 (nucleophile) is an active-site residue. Asparagine 184 contacts NAD(+). D-glyceraldehyde 3-phosphate is bound by residues arginine 198, 211 to 212 (TG), and arginine 234. Asparagine 317 is an NAD(+) binding site.

This sequence belongs to the glyceraldehyde-3-phosphate dehydrogenase family. As to quaternary structure, homotetramer.

The protein resides in the cytoplasm. The enzyme catalyses D-glyceraldehyde 3-phosphate + phosphate + NAD(+) = (2R)-3-phospho-glyceroyl phosphate + NADH + H(+). It functions in the pathway carbohydrate degradation; glycolysis; pyruvate from D-glyceraldehyde 3-phosphate: step 1/5. Its activity is regulated as follows. Resistant to pentalenolactone. Functionally, catalyzes the oxidative phosphorylation of glyceraldehyde 3-phosphate (G3P) to 1,3-bisphosphoglycerate (BPG) using the cofactor NAD. The first reaction step involves the formation of a hemiacetal intermediate between G3P and a cysteine residue, and this hemiacetal intermediate is then oxidized to a thioester, with concomitant reduction of NAD to NADH. The reduced NADH is then exchanged with the second NAD, and the thioester is attacked by a nucleophilic inorganic phosphate to produce BPG. The sequence is that of Glyceraldehyde-3-phosphate dehydrogenase (gap) from Streptomyces coelicolor (strain ATCC BAA-471 / A3(2) / M145).